An 815-amino-acid polypeptide reads, in one-letter code: Subtilisin-like protease SBT2.5 (815 aa).

A signal peptide spans 1–19 (MDIGLRIFVVFVLLVAVTA). Residues 21–124 (VYIVTMEGDP…RSVDKDWKVR (104 aa)) form the Inhibitor I9 domain. A Peptidase S8 domain is found at 120 to 671 (DWKVRRLTTH…SGHVNPSAAL (552 aa)). Catalysis depends on charge relay system residues D160 and H234. The region spanning 397 to 501 (TLVSANDVLL…VSKSMDLIDY (105 aa)) is the PA domain. N-linked (GlcNAc...) asparagine glycosylation is found at N503 and N577. Catalysis depends on S596, which acts as the Charge relay system. N701 is a glycosylation site (N-linked (GlcNAc...) asparagine).

The protein belongs to the peptidase S8 family. As to expression, expressed in roots, leaves and flowers of mature plants.

This chain is Subtilisin-like protease SBT2.5, found in Arabidopsis thaliana (Mouse-ear cress).